Here is a 357-residue protein sequence, read N- to C-terminus: MSTRRDLPQSPYLAAVTGRKPSRVPVWFMRQAGRSLPEYRALRERYSMLAACFEPDVACEITLQPIRRYDVDAAILFSDIVVPLRAAGVDLDIVADVGPVIADPVRTAADVAAMKPLDPQAIQPVLVAASLLVAELGDVPLIGFAGAPFTLASYLVEGGPSRHHAHVKAMMLAEPASWHALMAKLTDLTIAFLVGQIDAGVDAIQVFDSWAGALSPIDYRQYVLPHSARVFAALGEHGVPMTHFGVGTAELLGAMSEAVTAGERPGRGAVVGVDWRTPLTDAAARVVPGTALQGNLDPAVVLAGWPAVERAARAVVDDGRRAVDAGAAGHIFNLGHGVLPESDPAVLADLVSLVHSL.

Residues 30-34, aspartate 79, tyrosine 154, serine 209, and histidine 336 contribute to the substrate site; that span reads RQAGR.

Belongs to the uroporphyrinogen decarboxylase family. In terms of assembly, homodimer.

It is found in the cytoplasm. It carries out the reaction uroporphyrinogen III + 4 H(+) = coproporphyrinogen III + 4 CO2. Its pathway is porphyrin-containing compound metabolism; protoporphyrin-IX biosynthesis; coproporphyrinogen-III from 5-aminolevulinate: step 4/4. Catalyzes the decarboxylation of four acetate groups of uroporphyrinogen-III to yield coproporphyrinogen-III. In Mycobacterium bovis (strain ATCC BAA-935 / AF2122/97), this protein is Uroporphyrinogen decarboxylase.